Reading from the N-terminus, the 260-residue chain is MALISMKNVTLKKQGKILLNNLNWKVKKGENWVILGLNGSGKTTLLKLIMAEYWSTQGQVEILNTRFGQGDIPNMRTKIGVVGSFIAERLPANMLAEKIVLTGKYKSSILYKEYDETELNEARQMLTVIGGKHLLGRIYSSLSQGEKQLLLIARSLMEDPEIIILDEATSGLDLFAREKLLTQVEKITELPHAPTILYVTHHAEEITDKMSHILLLRRGKIVAQGPKKDIITPQVLENFYESPVNIISIDDKRFFIKPQV.

The region spanning 4–243 is the ABC transporter domain; the sequence is ISMKNVTLKK…QVLENFYESP (240 aa). 36-43 lines the ATP pocket; that stretch reads GLNGSGKT.

Belongs to the ABC transporter superfamily.

In Streptococcus mutans serotype c (strain ATCC 700610 / UA159), this protein is Putative ABC transporter ATP-binding protein (abcX).